The following is a 399-amino-acid chain: S-adenosylmethionine synthase (399 aa).

Histidine 17 contributes to the ATP binding site. Aspartate 19 is a binding site for Mg(2+). Position 45 (glutamate 45) interacts with K(+). Residues glutamate 58 and glutamine 101 each coordinate L-methionine. The tract at residues 101-111 (QSADIAMGVDQ) is flexible loop. Residues 177–179 (DGK), 244–245 (RF), aspartate 253, 259–260 (RK), alanine 276, and lysine 280 each bind ATP. L-methionine is bound at residue aspartate 253. Lysine 284 provides a ligand contact to L-methionine.

The protein belongs to the AdoMet synthase family. In terms of assembly, homotetramer; dimer of dimers. Mg(2+) serves as cofactor. It depends on K(+) as a cofactor.

The protein localises to the cytoplasm. It carries out the reaction L-methionine + ATP + H2O = S-adenosyl-L-methionine + phosphate + diphosphate. It functions in the pathway amino-acid biosynthesis; S-adenosyl-L-methionine biosynthesis; S-adenosyl-L-methionine from L-methionine: step 1/1. Functionally, catalyzes the formation of S-adenosylmethionine (AdoMet) from methionine and ATP. The overall synthetic reaction is composed of two sequential steps, AdoMet formation and the subsequent tripolyphosphate hydrolysis which occurs prior to release of AdoMet from the enzyme. This Bacillus thuringiensis subsp. konkukian (strain 97-27) protein is S-adenosylmethionine synthase.